The chain runs to 105 residues: MALRYPMAVGLNKGHKVTKNVSKPRHSRRRGRLTKHTKFVRDMIREVCAFAPYERRAMELLKVSKDKRALKFIKKRVGTHIRAKRKREELSNVLAAMRKAAAKKD.

Lys62 is modified (N6-acetyllysine).

This sequence belongs to the eukaryotic ribosomal protein eL36 family. Component of the large ribosomal subunit.

It localises to the cytoplasm. The protein localises to the cytosol. Component of the large ribosomal subunit. The ribosome is a large ribonucleoprotein complex responsible for the synthesis of proteins in the cell. This chain is Large ribosomal subunit protein eL36 (Rpl36), found in Rattus norvegicus (Rat).